A 646-amino-acid chain; its full sequence is Autophagy-related protein 28 (646 aa).

Disordered regions lie at residues 1–148 (MSSP…HVDN) and 221–245 (PTRS…RGLK). A compositionally biased stretch (polar residues) spans 12–21 (SPRQRLSNPL). Over residues 63 to 75 (SATSTRRSSSPAS) the composition is skewed to low complexity. Positions 106–122 (MMMNQHPSRQSTVSSHG) are enriched in polar residues. Coiled-coil stretches lie at residues 283-350 (LDKM…MEDV) and 485-514 (QQAA…ESKH). 2 disordered regions span residues 475 to 494 (SQAG…SQLS) and 546 to 612 (AAAV…RGSA). Basic and acidic residues-rich tracts occupy residues 557–575 (STDK…SHDE) and 588–597 (RMEDHDHDPP).

Belongs to the ATG28 family.

Its subcellular location is the cytoplasm. The protein localises to the vacuole membrane. It is found in the cytoplasmic vesicle membrane. Required for the autophagic degradation of peroxisomes called pexophagy, but not essential for general autophagy. Involved in resistance to elevated pH. The sequence is that of Autophagy-related protein 28 from Gibberella zeae (strain ATCC MYA-4620 / CBS 123657 / FGSC 9075 / NRRL 31084 / PH-1) (Wheat head blight fungus).